The primary structure comprises 322 residues: HPr kinase/phosphorylase (322 aa).

Catalysis depends on residues H146 and K167. 161–168 (GDSGLGKS) contributes to the ATP binding site. S168 is a binding site for Mg(2+). D185 serves as the catalytic Proton acceptor; for phosphorylation activity. Proton donor; for dephosphorylation activity. Positions 209–218 (LEVRGLGLLD) are important for the catalytic mechanism of both phosphorylation and dephosphorylation. E210 serves as a coordination point for Mg(2+). Residue R250 is part of the active site. Positions 271 to 276 (QVAAGR) are important for the catalytic mechanism of dephosphorylation.

Belongs to the HPrK/P family. As to quaternary structure, homohexamer. It depends on Mg(2+) as a cofactor.

It carries out the reaction [HPr protein]-L-serine + ATP = [HPr protein]-O-phospho-L-serine + ADP + H(+). It catalyses the reaction [HPr protein]-O-phospho-L-serine + phosphate + H(+) = [HPr protein]-L-serine + diphosphate. In terms of biological role, catalyzes the ATP- as well as the pyrophosphate-dependent phosphorylation of a specific serine residue in HPr, a phosphocarrier protein of the phosphoenolpyruvate-dependent sugar phosphotransferase system (PTS). HprK/P also catalyzes the pyrophosphate-producing, inorganic phosphate-dependent dephosphorylation (phosphorolysis) of seryl-phosphorylated HPr (P-Ser-HPr). This chain is HPr kinase/phosphorylase, found in Burkholderia cenocepacia (strain HI2424).